A 427-amino-acid polypeptide reads, in one-letter code: Trigger factor (427 aa).

A PPIase FKBP-type domain is found at 163–248 (GDTVVIDFVG…VNEVKAKELP (86 aa)).

The protein belongs to the FKBP-type PPIase family. Tig subfamily.

Its subcellular location is the cytoplasm. It carries out the reaction [protein]-peptidylproline (omega=180) = [protein]-peptidylproline (omega=0). Its function is as follows. Involved in protein export. Acts as a chaperone by maintaining the newly synthesized protein in an open conformation. Functions as a peptidyl-prolyl cis-trans isomerase. The chain is Trigger factor from Lactococcus lactis subsp. cremoris (strain SK11).